Here is a 341-residue protein sequence, read N- to C-terminus: tRNA N6-adenosine threonylcarbamoyltransferase (341 aa).

Fe cation contacts are provided by H111 and H115. Substrate contacts are provided by residues 134–138 (LVSGG), D167, G180, and N276. Fe cation is bound at residue D304.

Belongs to the KAE1 / TsaD family. Fe(2+) is required as a cofactor.

It is found in the cytoplasm. The catalysed reaction is L-threonylcarbamoyladenylate + adenosine(37) in tRNA = N(6)-L-threonylcarbamoyladenosine(37) in tRNA + AMP + H(+). In terms of biological role, required for the formation of a threonylcarbamoyl group on adenosine at position 37 (t(6)A37) in tRNAs that read codons beginning with adenine. Is involved in the transfer of the threonylcarbamoyl moiety of threonylcarbamoyl-AMP (TC-AMP) to the N6 group of A37, together with TsaE and TsaB. TsaD likely plays a direct catalytic role in this reaction. The polypeptide is tRNA N6-adenosine threonylcarbamoyltransferase (Pseudomonas entomophila (strain L48)).